The following is a 472-amino-acid chain: CAAX prenyl protease 1 homolog (472 aa).

Residues 1 to 8 (MDVGGALD) lie on the Lumenal side of the membrane. Residues 9 to 29 (LYGCSVNVYNAILIFIWVLFL) traverse the membrane as a helical segment. The Cytoplasmic segment spans residues 30-75 (WETYINLRQLKVAKRVTESPEEIKCLMNDVDFDKSRRYAIDKMNFD). The helical transmembrane segment at 76–96 (IVSGFYNILSLSAVLYFQLIA) threads the bilayer. The Lumenal segment spans residues 97 to 124 (WAWHKSQEHMLFVCSYAPRSFGTTEGSE). The chain crosses the membrane as a helical span at residues 125–145 (ILFSLLFTVYVALFQFFESLP). At 146–175 (WSYYRHFVIEERYGFNKQTIGFFIKDRLKS) the chain is on the cytoplasmic side. A helical transmembrane segment spans residues 176-196 (LAVGLVIGLPIISMLVWIIKA). The Lumenal segment spans residues 197-207 (GGHYFYIYAYG). Residues 208–228 (FTFVVSFIIMFIYPEFIAPIF) form a helical membrane-spanning segment. Residues 229–340 (DRYEHFPDCE…LGHWKLKHMT (112 aa)) are Cytoplasmic-facing. H329 is a Zn(2+) binding site. Residue E330 is part of the active site. H333 serves as a coordination point for Zn(2+). Residues 341-361 (FNLIIAQINIFFMFFAFGQLI) traverse the membrane as a helical segment. Residues 362 to 382 (NVDQLFVDFGFPPSTAPILIR) lie on the Lumenal side of the membrane. Residues 383–403 (LIVVFQFIFMPYSSVLEFLMT) form a helical membrane-spanning segment. Residues 404–472 (MLSRKFEFQA…AIDAKMGKEK (69 aa)) are Cytoplasmic-facing. E410 contacts Zn(2+). The Proton donor role is filled by D414.

This sequence belongs to the peptidase M48A family. In terms of assembly, homodimer; disulfide-linked. Zn(2+) is required as a cofactor.

It is found in the endoplasmic reticulum membrane. It catalyses the reaction Hydrolyzes the peptide bond -P2-(S-farnesyl or geranylgeranyl)C-P1'-P2'-P3'-COOH where P1' and P2' are amino acids with aliphatic side chains and P3' is any C-terminal residue.. With respect to regulation, inhibited by ethylenediaminetetraacetic acid (EDTA) but not by serine, aspartic or cysteine protease inhibitors. Inhibited by high concentration of Zn(2+) (&gt; 0.1 mM). Its function is as follows. Zinc-dependent metalloproteinase. Proteolytically removes the C-terminal three residues of farnesylated proteins. This Taenia solium (Pork tapeworm) protein is CAAX prenyl protease 1 homolog.